The following is a 289-amino-acid chain: 2-dehydro-3-deoxyphosphooctonate aldolase (289 aa).

This sequence belongs to the KdsA family.

The protein localises to the cytoplasm. The enzyme catalyses D-arabinose 5-phosphate + phosphoenolpyruvate + H2O = 3-deoxy-alpha-D-manno-2-octulosonate-8-phosphate + phosphate. Its pathway is carbohydrate biosynthesis; 3-deoxy-D-manno-octulosonate biosynthesis; 3-deoxy-D-manno-octulosonate from D-ribulose 5-phosphate: step 2/3. It functions in the pathway bacterial outer membrane biogenesis; lipopolysaccharide biosynthesis. This is 2-dehydro-3-deoxyphosphooctonate aldolase from Cupriavidus taiwanensis (strain DSM 17343 / BCRC 17206 / CCUG 44338 / CIP 107171 / LMG 19424 / R1) (Ralstonia taiwanensis (strain LMG 19424)).